The sequence spans 328 residues: Arabinose 5-phosphate isomerase KdsD (328 aa).

Residues Cys-42 to Phe-184 enclose the SIS domain. Substrate is bound by residues Gly-75–Thr-76, His-82, His-88, Ala-114–His-123, Lys-148–Ala-150, Thr-222, and Asp-275. Residue His-82 participates in Zn(2+) binding. The CBS 1 domain occupies Met-210–Val-268. The region spanning Met-277–Val-328 is the CBS 2 domain.

It belongs to the SIS family. GutQ/KpsF subfamily. As to quaternary structure, homotetramer.

The enzyme catalyses D-arabinose 5-phosphate = D-ribulose 5-phosphate. It participates in carbohydrate biosynthesis; 3-deoxy-D-manno-octulosonate biosynthesis; 3-deoxy-D-manno-octulosonate from D-ribulose 5-phosphate: step 1/3. It functions in the pathway bacterial outer membrane biogenesis; lipopolysaccharide biosynthesis. Its activity is regulated as follows. Completely inhibited by 10 uM of nickel, copper, cadmium and mercury ions. Inhibited by zinc with an IC(50) of 1-3 uM. Metal ion inhibition may be a mechanism to control activity in vivo. Functionally, involved in the biosynthesis of 3-deoxy-D-manno-octulosonate (KDO), a unique 8-carbon sugar component of lipopolysaccharides (LPSs). KdsD is not essential in the KDO biosynthesis and can be substituted by GutQ. Catalyzes the reversible aldol-ketol isomerization between D-ribulose 5-phosphate (Ru5P) and D-arabinose 5-phosphate (A5P). This Escherichia coli (strain K12) protein is Arabinose 5-phosphate isomerase KdsD (kdsD).